The following is a 96-amino-acid chain: MNAVTVNDDGLVLRLYIQPKASRDSIVGLHGDEVKVAITAPPVDGQANSHLVKFLGKQFRVAKSQVVIEKGELGRHKQIKIINPQQIPPEIAALIN.

It belongs to the UPF0235 family.

In Escherichia coli (strain K12 / MC4100 / BW2952), this protein is UPF0235 protein YggU.